We begin with the raw amino-acid sequence, 1471 residues long: Myosin-51 (1471 aa).

The 55-residue stretch at 7–61 (SVGSECWVSNNNGHWDAARLIEIKDNGGGKVVATVAKSSGVLETVNYQQLQNRNI) folds into the Myosin N-terminal SH3-like domain. Positions 65 to 749 (ESPSDLTNLP…VIGNFEEAHR (685 aa)) constitute a Myosin motor domain. 159-166 (GESGAGKT) provides a ligand contact to ATP. An actin-binding region spans residues 628-650 (LSQLMTTVSSTNVHYIRCIKPNE). IQ domains lie at 753 to 773 (SKST…KEYQ), 776 to 796 (VKFI…QRFE), 801 to 821 (ERAA…KRYL), 824 to 844 (IKCA…SRYI), 849 to 869 (ESSA…KTFR), and 872 to 892 (KKSV…RYLR). Positions 909–952 (KNLQASITEVSKQLKSNSKKVTVLRNKLNILNNSLSKWKCLIKK) form a coiled coil. One can recognise a Dilute domain in the interval 1171–1417 (EKPLQAVLYW…SKAVEALSCK (247 aa)).

This sequence belongs to the TRAFAC class myosin-kinesin ATPase superfamily. Myosin family.

Its subcellular location is the cytoplasm. In terms of biological role, involved in cytokinesis. The polypeptide is Myosin-51 (myo51) (Schizosaccharomyces pombe (strain 972 / ATCC 24843) (Fission yeast)).